The sequence spans 146 residues: Large ribosomal subunit protein uL15 (146 aa).

The disordered stretch occupies residues 1–52 (MKLSNLSPKAGSKKRRRRVGRGIAAGQGASCGFGMRGQKSRSGTGTKAGFEG). Over residues 11-20 (GSKKRRRRVG) the composition is skewed to basic residues. The segment covering 23–35 (IAAGQGASCGFGM) has biased composition (gly residues).

The protein belongs to the universal ribosomal protein uL15 family. As to quaternary structure, part of the 50S ribosomal subunit.

Functionally, binds to the 23S rRNA. This Picosynechococcus sp. (strain ATCC 27264 / PCC 7002 / PR-6) (Agmenellum quadruplicatum) protein is Large ribosomal subunit protein uL15.